Here is a 308-residue protein sequence, read N- to C-terminus: Ribosomal RNA large subunit methyltransferase F (308 aa).

Belongs to the methyltransferase superfamily. METTL16/RlmF family.

The protein localises to the cytoplasm. The enzyme catalyses adenosine(1618) in 23S rRNA + S-adenosyl-L-methionine = N(6)-methyladenosine(1618) in 23S rRNA + S-adenosyl-L-homocysteine + H(+). Functionally, specifically methylates the adenine in position 1618 of 23S rRNA. This is Ribosomal RNA large subunit methyltransferase F from Escherichia coli (strain SMS-3-5 / SECEC).